A 439-amino-acid chain; its full sequence is ATP-dependent RNA helicase RhlB (439 aa).

Residues 9–37 (QKFADLPLCDEVKQALNENGFEHCTPIQA) carry the Q motif motif. A Helicase ATP-binding domain is found at 40–219 (LPVLLEKKDI…YDHMNDPVKV (180 aa)). 53–60 (AQTGTGKT) serves as a coordination point for ATP. Positions 165–168 (DEAD) match the DEAD box motif. In terms of domain architecture, Helicase C-terminal spans 243-390 (KLKLLHSLIE…VTSYDRDALI (148 aa)). The disordered stretch occupies residues 394–439 (PPVKIHRKPHAGGRNLRDRNGSPRPSGSHRSGSGRPPRHDRTRRHS). Over residues 415 to 428 (SPRPSGSHRSGSGR) the composition is skewed to low complexity. Basic residues predominate over residues 429–439 (PPRHDRTRRHS).

This sequence belongs to the DEAD box helicase family. RhlB subfamily. In terms of assembly, component of the RNA degradosome, which is a multiprotein complex involved in RNA processing and mRNA degradation.

It localises to the cytoplasm. The catalysed reaction is ATP + H2O = ADP + phosphate + H(+). Its function is as follows. DEAD-box RNA helicase involved in RNA degradation. Has RNA-dependent ATPase activity and unwinds double-stranded RNA. This Shewanella amazonensis (strain ATCC BAA-1098 / SB2B) protein is ATP-dependent RNA helicase RhlB.